The sequence spans 371 residues: Peptidyl-prolyl cis-trans isomerase D (371 aa).

Residues 11–172 (FFDIQIGNEK…KDVTIVECGE (162 aa)) form the PPIase cyclophilin-type domain. Residues 175–195 (GQDYDDADKQTPDATGDPYED) are disordered. 3 TPR repeats span residues 214 to 247 (ASELKNFGNAAFKSGNLALGLEKYQKGLRYLHEF), 267 to 300 (FALHSNSSLLANKLAQYGNGRSWATYALDTANAA), and 308 to 341 (AKAYYRRAVASSGLKEEDEALKDLQEAEKLAPGD).

It belongs to the cyclophilin-type PPIase family. PPIase D subfamily.

The protein localises to the cytoplasm. The catalysed reaction is [protein]-peptidylproline (omega=180) = [protein]-peptidylproline (omega=0). Functionally, PPIases accelerate the folding of proteins. It catalyzes the cis-trans isomerization of proline imidic peptide bonds in oligopeptides. This is Peptidyl-prolyl cis-trans isomerase D (cpr6) from Aspergillus oryzae (strain ATCC 42149 / RIB 40) (Yellow koji mold).